Here is a 488-residue protein sequence, read N- to C-terminus: G-patch domain and KOW motifs-containing protein (488 aa).

Residues 1–11 are compositionally biased toward pro residues; the sequence is MAGRESPPPSA. The interval 1-20 is disordered; it reads MAGRESPPPSAPSMAPISFG. Ala2 carries the N-acetylalanine modification. Ser25 is subject to Phosphoserine; by PKA. A disordered region spans residues 72–97; the sequence is IQNGSRRQPLSKNPKPSSETSTVLMS. Over residues 73-95 the composition is skewed to polar residues; sequence QNGSRRQPLSKNPKPSSETSTVL. Ser115 bears the Phosphoserine mark. Residues 164–210 form the G-patch domain; the sequence is VEAYGLAMLRGMGWKPGKGIGNTFSQVVKPRVNSIRPKGLGLGANRM. Disordered regions lie at residues 216-241 and 295-367; these read ASVGSHHPPRPDGDRENDKEGQPQGL and QEFD…PRNK. Positions 224–236 are enriched in basic and acidic residues; sequence PRPDGDRENDKEG. The KOW 1 domain maps to 231-258; it reads ENDKEGQPQGLMHGRAVVVLSGPYRGLY. Residues 307–331 show a composition bias toward polar residues; that stretch reads VSQTSTEQQNRATGTASSLKAAQNQ. Composition is skewed to basic and acidic residues over residues 332-341 and 349-363; these read EDSKRRQKGS and PDRQDGPVPKTEKAA. The region spanning 401 to 428 is the KOW 2 domain; that stretch reads PDTCVCRTDEGRVLEDVREDMLETLIPK. Position 485 is a phosphoserine (Ser485).

Belongs to the MOS2 family. In terms of assembly, component of the minor spliceosome, which splices U12-type introns. Interacts with PRKX, PRKACB and DHX16. Phosphorylation regulates its ability to bind RNA.

The protein resides in the nucleus. Its function is as follows. RNA-binding protein involved in pre-mRNA splicing. As a component of the minor spliceosome, involved in the splicing of U12-type introns in pre-mRNAs. This Mus musculus (Mouse) protein is G-patch domain and KOW motifs-containing protein (Gpkow).